A 151-amino-acid chain; its full sequence is Transcriptional regulator MraZ (151 aa).

2 SpoVT-AbrB domains span residues 5-52 and 81-124; these read ATAV…PLMN and ATEC…SDVE.

Belongs to the MraZ family. In terms of assembly, forms oligomers.

Its subcellular location is the cytoplasm. It localises to the nucleoid. In Haemophilus influenzae (strain PittGG), this protein is Transcriptional regulator MraZ.